The chain runs to 297 residues: Mitochondrial glycine transporter (297 aa).

Solcar repeat units follow at residues 5–81 (TGHL…MRTA), 105–189 (LSMY…LKHT), and 211–295 (TSTA…LIKH). 6 helical membrane-spanning segments follow: residues 8-33 (LIGGFAGGLSSAVALQPLDLLKTRFQ), 56-82 (GTLPSAIRTSVGSALYLSSLNLMRTAL), 111-136 (LVTGAFARGTVGYITMPITIIKVRYE), 164-187 (GFGPTCLRDAPYSGLYVLLYEKLK), 215-241 (INSTSAILSASMATTVTAPFDTIKTRM), and 270-288 (GLSMRLTRKALSAGIAWGI).

This sequence belongs to the mitochondrial carrier (TC 2.A.29) family. SLC25A38 subfamily.

It is found in the mitochondrion inner membrane. It carries out the reaction glycine(in) = glycine(out). In terms of biological role, mitochondrial glycine transporter that imports glycine into the mitochondrial matrix. Plays an important role in providing glycine for the first enzymatic step in heme biosynthesis, the condensation of glycine with succinyl-CoA to produce 5-aminolevulinate (ALA) in the mitochondrial matrix. The protein is Mitochondrial glycine transporter of Candida glabrata (strain ATCC 2001 / BCRC 20586 / JCM 3761 / NBRC 0622 / NRRL Y-65 / CBS 138) (Yeast).